Here is a 459-residue protein sequence, read N- to C-terminus: Cobyrinate a,c-diamide synthase (459 aa).

The GATase cobBQ-type domain maps to 252–446 (TLALADDEAF…LHVHFAQRPE (195 aa)). Cys334 serves as the catalytic Nucleophile.

Belongs to the CobB/CbiA family. As to quaternary structure, monomer. It depends on Mg(2+) as a cofactor.

It catalyses the reaction cob(II)yrinate + 2 L-glutamine + 2 ATP + 2 H2O = cob(II)yrinate a,c diamide + 2 L-glutamate + 2 ADP + 2 phosphate + 2 H(+). It participates in cofactor biosynthesis; adenosylcobalamin biosynthesis; cob(II)yrinate a,c-diamide from sirohydrochlorin (anaerobic route): step 10/10. Catalyzes the ATP-dependent amidation of the two carboxylate groups at positions a and c of cobyrinate, using either L-glutamine or ammonia as the nitrogen source. Is able to use other nucleotide triphosphates as substrate, such as GTP or UTP, although less efficiently than ATP. This chain is Cobyrinate a,c-diamide synthase, found in Salmonella typhimurium (strain LT2 / SGSC1412 / ATCC 700720).